The sequence spans 295 residues: Cytidine deaminase (295 aa).

CMP/dCMP-type deaminase domains lie at 48–168 and 187–295; these read TDNQ…FGPS and EDDD…YLSL. 89-91 contacts substrate; sequence NME. Histidine 102 contributes to the Zn(2+) binding site. The active-site Proton donor is the glutamate 104. Zn(2+)-binding residues include cysteine 129 and cysteine 132.

This sequence belongs to the cytidine and deoxycytidylate deaminase family. As to quaternary structure, homodimer. It depends on Zn(2+) as a cofactor.

The catalysed reaction is cytidine + H2O + H(+) = uridine + NH4(+). It catalyses the reaction 2'-deoxycytidine + H2O + H(+) = 2'-deoxyuridine + NH4(+). In terms of biological role, this enzyme scavenges exogenous and endogenous cytidine and 2'-deoxycytidine for UMP synthesis. The sequence is that of Cytidine deaminase from Vibrio vulnificus (strain CMCP6).